Reading from the N-terminus, the 341-residue chain is Tetraacyldisaccharide 4'-kinase (341 aa).

Residue 57-64 participates in ATP binding; sequence TVGGTGKT.

The protein belongs to the LpxK family.

It carries out the reaction a lipid A disaccharide + ATP = a lipid IVA + ADP + H(+). The protein operates within glycolipid biosynthesis; lipid IV(A) biosynthesis; lipid IV(A) from (3R)-3-hydroxytetradecanoyl-[acyl-carrier-protein] and UDP-N-acetyl-alpha-D-glucosamine: step 6/6. Transfers the gamma-phosphate of ATP to the 4'-position of a tetraacyldisaccharide 1-phosphate intermediate (termed DS-1-P) to form tetraacyldisaccharide 1,4'-bis-phosphate (lipid IVA). The chain is Tetraacyldisaccharide 4'-kinase from Maricaulis maris (strain MCS10) (Caulobacter maris).